A 436-amino-acid chain; its full sequence is Gamma-glutamyl phosphate reductase (436 aa).

The protein belongs to the gamma-glutamyl phosphate reductase family.

It localises to the cytoplasm. The enzyme catalyses L-glutamate 5-semialdehyde + phosphate + NADP(+) = L-glutamyl 5-phosphate + NADPH + H(+). It participates in amino-acid biosynthesis; L-proline biosynthesis; L-glutamate 5-semialdehyde from L-glutamate: step 2/2. Catalyzes the NADPH-dependent reduction of L-glutamate 5-phosphate into L-glutamate 5-semialdehyde and phosphate. The product spontaneously undergoes cyclization to form 1-pyrroline-5-carboxylate. The protein is Gamma-glutamyl phosphate reductase of Prochlorococcus marinus subsp. pastoris (strain CCMP1986 / NIES-2087 / MED4).